Consider the following 73-residue polypeptide: NAD(P)H-quinone oxidoreductase subunit L (73 aa).

A run of 2 helical transmembrane segments spans residues 7 to 27 and 44 to 64; these read LIGL…PFLF and VLMF…APFM.

This sequence belongs to the complex I NdhL subunit family. In terms of assembly, NDH-1 can be composed of about 15 different subunits; different subcomplexes with different compositions have been identified which probably have different functions.

The protein localises to the cellular thylakoid membrane. It catalyses the reaction a plastoquinone + NADH + (n+1) H(+)(in) = a plastoquinol + NAD(+) + n H(+)(out). The enzyme catalyses a plastoquinone + NADPH + (n+1) H(+)(in) = a plastoquinol + NADP(+) + n H(+)(out). Its function is as follows. NDH-1 shuttles electrons from an unknown electron donor, via FMN and iron-sulfur (Fe-S) centers, to quinones in the respiratory and/or the photosynthetic chain. The immediate electron acceptor for the enzyme in this species is believed to be plastoquinone. Couples the redox reaction to proton translocation, and thus conserves the redox energy in a proton gradient. Cyanobacterial NDH-1 also plays a role in inorganic carbon-concentration. This chain is NAD(P)H-quinone oxidoreductase subunit L, found in Synechococcus sp. (strain JA-3-3Ab) (Cyanobacteria bacterium Yellowstone A-Prime).